The following is a 148-amino-acid chain: Lysozyme C (148 aa).

Residues Met1 to Gly18 form the signal peptide. The C-type lysozyme domain maps to Lys19 to Val148. 4 disulfide bridges follow: Cys24–Cys146, Cys48–Cys134, Cys83–Cys99, and Cys95–Cys113. Catalysis depends on residues Glu53 and Asp71.

It belongs to the glycosyl hydrolase 22 family. As to quaternary structure, monomer.

Its subcellular location is the secreted. It carries out the reaction Hydrolysis of (1-&gt;4)-beta-linkages between N-acetylmuramic acid and N-acetyl-D-glucosamine residues in a peptidoglycan and between N-acetyl-D-glucosamine residues in chitodextrins.. Functionally, lysozymes have primarily a bacteriolytic function; those in tissues and body fluids are associated with the monocyte-macrophage system and enhance the activity of immunoagents. The polypeptide is Lysozyme C (LYZ) (Papio anubis (Olive baboon)).